The following is a 342-amino-acid chain: Nicotinate-nucleotide--dimethylbenzimidazole phosphoribosyltransferase (342 aa).

The Proton acceptor role is filled by E311.

The protein belongs to the CobT family.

The enzyme catalyses 5,6-dimethylbenzimidazole + nicotinate beta-D-ribonucleotide = alpha-ribazole 5'-phosphate + nicotinate + H(+). The protein operates within nucleoside biosynthesis; alpha-ribazole biosynthesis; alpha-ribazole from 5,6-dimethylbenzimidazole: step 1/2. Catalyzes the synthesis of alpha-ribazole-5'-phosphate from nicotinate mononucleotide (NAMN) and 5,6-dimethylbenzimidazole (DMB). The chain is Nicotinate-nucleotide--dimethylbenzimidazole phosphoribosyltransferase from Vibrio vulnificus (strain CMCP6).